The chain runs to 565 residues: Periplasmic trehalase (565 aa).

Positions 1–30 (MKSPAPSRPQKMALIPACIFLCFAALSVQA) are cleaved as a signal peptide. Residues Arg-152, 159–160 (WD), Asn-196, 205–207 (RSQ), 277–279 (RPE), and Gly-310 each bind substrate. Catalysis depends on proton donor/acceptor residues Asp-312 and Glu-496. Glu-511 serves as a coordination point for substrate. The segment at 539 to 565 (CDNVPATRPLSESTTQPLKQKEAEPTP) is disordered.

It belongs to the glycosyl hydrolase 37 family. In terms of assembly, monomer.

It localises to the periplasm. It catalyses the reaction alpha,alpha-trehalose + H2O = alpha-D-glucose + beta-D-glucose. Its function is as follows. Provides the cells with the ability to utilize trehalose at high osmolarity by splitting it into glucose molecules that can subsequently be taken up by the phosphotransferase-mediated uptake system. The protein is Periplasmic trehalase of Escherichia coli O45:K1 (strain S88 / ExPEC).